We begin with the raw amino-acid sequence, 489 residues long: UDP-N-acetylmuramoyl-L-alanyl-D-glutamate--2,6-diaminopimelate ligase (489 aa).

S30 lines the UDP-N-acetyl-alpha-D-muramoyl-L-alanyl-D-glutamate pocket. 108 to 114 (GTNGKTT) provides a ligand contact to ATP. UDP-N-acetyl-alpha-D-muramoyl-L-alanyl-D-glutamate-binding positions include N149, 150–151 (TT), S177, Q183, and R185. N6-carboxylysine is present on K217. Residues R383, 407-410 (DNPR), G459, and E463 each bind meso-2,6-diaminopimelate. The short motif at 407 to 410 (DNPR) is the Meso-diaminopimelate recognition motif element.

It belongs to the MurCDEF family. MurE subfamily. Mg(2+) is required as a cofactor. In terms of processing, carboxylation is probably crucial for Mg(2+) binding and, consequently, for the gamma-phosphate positioning of ATP.

Its subcellular location is the cytoplasm. The enzyme catalyses UDP-N-acetyl-alpha-D-muramoyl-L-alanyl-D-glutamate + meso-2,6-diaminopimelate + ATP = UDP-N-acetyl-alpha-D-muramoyl-L-alanyl-gamma-D-glutamyl-meso-2,6-diaminopimelate + ADP + phosphate + H(+). It participates in cell wall biogenesis; peptidoglycan biosynthesis. Catalyzes the addition of meso-diaminopimelic acid to the nucleotide precursor UDP-N-acetylmuramoyl-L-alanyl-D-glutamate (UMAG) in the biosynthesis of bacterial cell-wall peptidoglycan. This chain is UDP-N-acetylmuramoyl-L-alanyl-D-glutamate--2,6-diaminopimelate ligase, found in Geobacillus thermodenitrificans (strain NG80-2).